Reading from the N-terminus, the 150-residue chain is Histone H3-like centromeric protein A (150 aa).

The tract at residues 1 to 56 (MRPGSTPASRRKSRPPRRVSPPLPTTSTRSPGRPSAPEQRKAPRATPKKRFRPGTR) is disordered. Residues 25-37 (TTSTRSPGRPSAP) show a composition bias toward low complexity. Over residues 42–53 (APRATPKKRFRP) the composition is skewed to basic residues. Positions 53-150 (PGTRALMEIR…RIRGVTEGLG (98 aa)) are H3-like.

It belongs to the histone H3 family. Component of centromeric nucleosomes, where DNA is wrapped around a histone octamer core. The octamer contains two molecules each of H2A, H2B, CENPA and H4 assembled in one CENPA-H4 heterotetramer and two H2A-H2B heterodimers. CENPA modulates the DNA-binding characteristics of nucleosomes so that protruding DNA ends have higher flexibility than in nucleosomes containing conventional histone H3.

It is found in the nucleus. The protein resides in the chromosome. It localises to the centromere. Its function is as follows. Histone H3-like nucleosomal protein that is specifically found in centromeric nucleosomes. Replaces conventional H3 in the nucleosome core of centromeric chromatin that serves as an assembly site for the inner kinetochore. The presence of CENPA subtly modifies the nucleosome structure and the way DNA is wrapped around the nucleosome and gives rise to protruding DNA ends that are less well-ordered and rigid compared to nucleosomes containing histone H3. May serve as an epigenetic mark that propagates centromere identity through replication and cell division. Required for recruitment and assembly of kinetochore proteins, and as a consequence required for progress through mitosis, chromosome segregation and cytokinesis. The sequence is that of Histone H3-like centromeric protein A (cenpa) from Xenopus tropicalis (Western clawed frog).